The following is a 194-amino-acid chain: dITP/XTP pyrophosphatase (194 aa).

Residue 8-13 coordinates substrate; the sequence is TSNPGK. 2 residues coordinate Mg(2+): glutamate 38 and aspartate 67. Aspartate 67 functions as the Proton acceptor in the catalytic mechanism. Residues serine 68, 152-155, lysine 175, and 180-181 each bind substrate; these read FGYD and HR.

This sequence belongs to the HAM1 NTPase family. In terms of assembly, homodimer. The cofactor is Mg(2+).

The enzyme catalyses XTP + H2O = XMP + diphosphate + H(+). It carries out the reaction dITP + H2O = dIMP + diphosphate + H(+). It catalyses the reaction ITP + H2O = IMP + diphosphate + H(+). In terms of biological role, pyrophosphatase that catalyzes the hydrolysis of nucleoside triphosphates to their monophosphate derivatives, with a high preference for the non-canonical purine nucleotides XTP (xanthosine triphosphate), dITP (deoxyinosine triphosphate) and ITP. Seems to function as a house-cleaning enzyme that removes non-canonical purine nucleotides from the nucleotide pool, thus preventing their incorporation into DNA/RNA and avoiding chromosomal lesions. The sequence is that of dITP/XTP pyrophosphatase from Legionella pneumophila (strain Lens).